The sequence spans 325 residues: Nod factor export ATP-binding protein I (325 aa).

Residues 27-257 (LELRKVRKQY…QIGCDVVEVY (231 aa)) form the ABC transporter domain. ATP is bound at residue 59 to 66 (GPNGAGKT).

This sequence belongs to the ABC transporter superfamily. Lipooligosaccharide exporter (TC 3.A.1.102) family. In terms of assembly, the complex is composed of two ATP-binding proteins (NodI) and two transmembrane proteins (NodJ).

The protein resides in the cell inner membrane. Its function is as follows. Part of the ABC transporter complex NodIJ involved in the export of the nodulation factors (Nod factors), the bacterial signal molecules that induce symbiosis and subsequent nodulation induction. Nod factors are LCO (lipo-chitin oligosaccharide), a modified beta-1,4-linked N-acetylglucosamine oligosaccharide. This subunit is responsible for energy coupling to the transport system. This is Nod factor export ATP-binding protein I from Cupriavidus pinatubonensis (strain JMP 134 / LMG 1197) (Cupriavidus necator (strain JMP 134)).